Reading from the N-terminus, the 96-residue chain is Dynein light chain roadblock-type 2 (96 aa).

A2 is subject to N-acetylalanine.

The protein belongs to the GAMAD family. As to quaternary structure, homodimer. The cytoplasmic dynein 1 complex consists of two catalytic heavy chains (HCs) and a number of non-catalytic subunits presented by intermediate chains (ICs), light intermediate chains (LICs) and light chains (LCs); the composition seems to vary in respect to the IC, LIC and LC composition. The heavy chain homodimer serves as a scaffold for the probable homodimeric assembly of the respective non-catalytic subunits. The ICs and LICs bind directly to the HC dimer and the LCs assemble on the IC dimer. Interacts with DYNC1I1 and DYNC1I2. Self-associates. Interacts with DYNLRB1. As to expression, high expression in heart, brain, placenta, skeletal muscle, prostate and small intestine; moderate in kidney, pancreas, spleen, testis, ovary and colon; low in lung, liver, thymus and leukocyte.

Its subcellular location is the cytoplasm. The protein localises to the cytoskeleton. In terms of biological role, acts as one of several non-catalytic accessory components of the cytoplasmic dynein 1 complex that are thought to be involved in linking dynein to cargos and to adapter proteins that regulate dynein function. Cytoplasmic dynein 1 acts as a motor for the intracellular retrograde motility of vesicles and organelles along microtubules. This is Dynein light chain roadblock-type 2 (DYNLRB2) from Homo sapiens (Human).